Reading from the N-terminus, the 181-residue chain is Histone deacetylase complex subunit SAP30L-A (181 aa).

2 cysteine pairs are disulfide-bonded: C26–C27 and C35–C71. The Atypical zinc finger occupies 26–74; it reads CCLIDGGERCPRPAGNASFSKRVQKSISQKKLKLDIDKNVRHLYICDFH. Residues 82–103 form a disordered region; that stretch reads RNKRKRKTSDDGGDSPEHETDI. The Nuclear localization signal (NLS) motif lies at 83–88; it reads NKRKRK. Positions 85 to 87 are important for DNA and phosphoinositide binding; the sequence is RKR.

This sequence belongs to the SAP30 family. In terms of assembly, interacts with components of the histone deacetylase complex sin3a, hdac1 and hdac2. Binds histones and nucleosomes.

The protein localises to the nucleus. Its subcellular location is the nucleolus. In terms of biological role, functions as a transcription repressor, probably via its interaction with histone deacetylase complexes. Involved in the functional recruitment of the class 1 Sin3-histone deacetylase complex (HDAC) to the nucleolus. Binds DNA, apparently without sequence-specificity, and bends bound double-stranded DNA. Binds phosphoinositol phosphates (phosphoinositol 3-phosphate, phosphoinositol 4-phosphate and phosphoinositol 5-phosphate) via the same basic sequence motif that mediates DNA binding and nuclear import. The chain is Histone deacetylase complex subunit SAP30L-A (sap30l-a) from Xenopus laevis (African clawed frog).